A 295-amino-acid chain; its full sequence is Probable protein phosphatase 2C 5 (295 aa).

Positions 23 to 294 (QYAATHMQGW…DNMTCILVLF (272 aa)) constitute a PPM-type phosphatase domain. Positions 57 and 58 each coordinate Mn(2+). Residues 151-170 (NRDGKPFDMSKDHKPDDDQE) are disordered. The Mn(2+) site is built by Asp237 and Asp285.

Belongs to the PP2C family. It depends on Mg(2+) as a cofactor. The cofactor is Mn(2+).

The protein resides in the membrane. It catalyses the reaction O-phospho-L-seryl-[protein] + H2O = L-seryl-[protein] + phosphate. The enzyme catalyses O-phospho-L-threonyl-[protein] + H2O = L-threonyl-[protein] + phosphate. Its function is as follows. Enzyme with a broad specificity. In Paramecium tetraurelia, this protein is Probable protein phosphatase 2C 5.